The chain runs to 131 residues: MSGGKGGKVGSAAKASQTRSAKAGLTFPVGRVHRLLRRGNYAQRIGSGAPVYLTAVLEYLAAEILELAGNAARDNKKSRIIPRHLQLAIRNDDELNKLLGNVTIAQGGVLPNIHQNLLPKKSAKPSASQEL.

The residue at position 2 (Ser2) is an N-acetylserine. N6-acetyllysine is present on residues Lys5 and Lys8. Gln106 carries the N5-methylglutamine modification. At Ser128 the chain carries Phosphoserine. Residues 128 to 129 (SQ) carry the [ST]-Q motif motif.

Belongs to the histone H2A family. As to quaternary structure, the nucleosome is a histone octamer containing two molecules each of H2A, H2B, H3 and H4 assembled in one H3-H4 heterotetramer and two H2A-H2B heterodimers. The octamer wraps approximately 147 bp of DNA. Phosphorylated to form H2AS128ph (gamma-H2A) in response to DNA double-strand breaks (DSBs) generated by exogenous genotoxic agents and by stalled replication forks. Phosphorylation is dependent on the DNA damage checkpoint kinases MEC1/ATR and TEL1/ATM, spreads on either side of a detected DSB site and may mark the surrounding chromatin for recruitment of proteins required for DNA damage signaling and repair. Gamma-H2A is removed from the DNA prior to the strand invasion-primer extension step of the repair process and subsequently dephosphorylated by PPH3, a component of the histone H2A phosphatase complex (HTP-C). Dephosphorylation is necessary for efficient recovery from the DNA damage checkpoint. Post-translationally, acetylated by ESA1 to form H2AK4ac and H2AK7ac.

It is found in the nucleus. The protein resides in the chromosome. In terms of biological role, core component of nucleosome which plays a central role in DNA double strand break (DSB) repair. Nucleosomes wrap and compact DNA into chromatin, limiting DNA accessibility to the cellular machineries which require DNA as a template. Histones thereby play a central role in transcription regulation, DNA repair, DNA replication and chromosomal stability. DNA accessibility is regulated via a complex set of post-translational modifications of histones, also called histone code, and nucleosome remodeling. This is Histone H2A.2 (HTA2) from Candida glabrata (strain ATCC 2001 / BCRC 20586 / JCM 3761 / NBRC 0622 / NRRL Y-65 / CBS 138) (Yeast).